The sequence spans 150 residues: T-complex protein 1 subunit beta (150 aa).

Residue Asp-35 coordinates Mg(2+). ADP is bound by residues Gly-36, Thr-37, Thr-38, and Ser-39. ATP is bound by residues Gly-36, Thr-37, and Thr-38.

The protein belongs to the TCP-1 chaperonin family. In terms of assembly, component of the chaperonin-containing T-complex (TRiC), a hexadecamer composed of two identical back-to-back stacked rings enclosing a protein folding chamber. Each ring is made up of eight different subunits: TCP1/CCT1, CCT2, CCT3, CCT4, CCT5, CCT6A/CCT6, CCT7, CCT8. Interacts with PACRG. Interacts with FLCN. Interacts with DLEC1. Interacts with SVEP1.

It localises to the cytoplasm. The catalysed reaction is ATP + H2O = ADP + phosphate + H(+). Its function is as follows. Component of the chaperonin-containing T-complex (TRiC), a molecular chaperone complex that assists the folding of actin, tubulin and other proteins upon ATP hydrolysis. The TRiC complex mediates the folding of WRAP53/TCAB1, thereby regulating telomere maintenance. As part of the TRiC complex may play a role in the assembly of BBSome, a complex involved in ciliogenesis regulating transports vesicles to the cilia. This chain is T-complex protein 1 subunit beta, found in Mesocricetus auratus (Golden hamster).